A 158-amino-acid chain; its full sequence is Transcriptional repressor NrdR (158 aa).

A zinc finger spans residues 3–34 (CPFCNSEETRVIDTRLTDDGHVVRRRRECEHC). The region spanning 49-139 (IFVVKKGGQR…VYKEFRDLDH (91 aa)) is the ATP-cone domain.

It belongs to the NrdR family. Requires Zn(2+) as cofactor.

Functionally, negatively regulates transcription of bacterial ribonucleotide reductase nrd genes and operons by binding to NrdR-boxes. The chain is Transcriptional repressor NrdR from Kosmotoga olearia (strain ATCC BAA-1733 / DSM 21960 / TBF 19.5.1).